The primary structure comprises 100 residues: Ferredoxin-2 (100 aa).

The region spanning 4-97 (YKVTLINEEE…DCTIMTHQES (94 aa)) is the 2Fe-2S ferredoxin-type domain. Residues cysteine 42, cysteine 47, cysteine 50, and cysteine 81 each contribute to the [2Fe-2S] cluster site.

Belongs to the 2Fe2S plant-type ferredoxin family. [2Fe-2S] cluster is required as a cofactor.

Functionally, ferredoxins are iron-sulfur proteins that transfer electrons in a wide variety of metabolic reactions. The chain is Ferredoxin-2 from Aphanothece sacrum.